We begin with the raw amino-acid sequence, 196 residues long: Putative 3-methyladenine DNA glycosylase (196 aa).

It belongs to the DNA glycosylase MPG family.

The protein is Putative 3-methyladenine DNA glycosylase of Chlorobium phaeovibrioides (strain DSM 265 / 1930) (Prosthecochloris vibrioformis (strain DSM 265)).